The primary structure comprises 883 residues: Phosphoenolpyruvate carboxylase (883 aa).

Active-site residues include His-138 and Lys-546.

Belongs to the PEPCase type 1 family. The cofactor is Mg(2+).

It carries out the reaction oxaloacetate + phosphate = phosphoenolpyruvate + hydrogencarbonate. In terms of biological role, forms oxaloacetate, a four-carbon dicarboxylic acid source for the tricarboxylic acid cycle. This chain is Phosphoenolpyruvate carboxylase, found in Shigella dysenteriae serotype 1 (strain Sd197).